Consider the following 383-residue polypeptide: ATP phosphoribosyltransferase regulatory subunit (383 aa).

The protein belongs to the class-II aminoacyl-tRNA synthetase family. HisZ subfamily. In terms of assembly, heteromultimer composed of HisG and HisZ subunits.

The protein resides in the cytoplasm. It functions in the pathway amino-acid biosynthesis; L-histidine biosynthesis; L-histidine from 5-phospho-alpha-D-ribose 1-diphosphate: step 1/9. In terms of biological role, required for the first step of histidine biosynthesis. May allow the feedback regulation of ATP phosphoribosyltransferase activity by histidine. In Janthinobacterium sp. (strain Marseille) (Minibacterium massiliensis), this protein is ATP phosphoribosyltransferase regulatory subunit.